A 376-amino-acid polypeptide reads, in one-letter code: Lipid-A-disaccharide synthase (376 aa).

This sequence belongs to the LpxB family.

The catalysed reaction is a lipid X + a UDP-2-N,3-O-bis[(3R)-3-hydroxyacyl]-alpha-D-glucosamine = a lipid A disaccharide + UDP + H(+). It functions in the pathway bacterial outer membrane biogenesis; LPS lipid A biosynthesis. Its function is as follows. Condensation of UDP-2,3-diacylglucosamine and 2,3-diacylglucosamine-1-phosphate to form lipid A disaccharide, a precursor of lipid A, a phosphorylated glycolipid that anchors the lipopolysaccharide to the outer membrane of the cell. This Coxiella burnetii (strain Dugway 5J108-111) protein is Lipid-A-disaccharide synthase.